Here is a 110-residue protein sequence, read N- to C-terminus: Phosphoribosyl-AMP cyclohydrolase (110 aa).

Position 80 (Asp-80) interacts with Mg(2+). Zn(2+) is bound at residue Cys-81. Asp-82 and Asp-84 together coordinate Mg(2+). Zn(2+)-binding residues include Cys-97 and Cys-104.

It belongs to the PRA-CH family. In terms of assembly, homodimer. Requires Mg(2+) as cofactor. Zn(2+) is required as a cofactor.

The protein resides in the cytoplasm. It catalyses the reaction 1-(5-phospho-beta-D-ribosyl)-5'-AMP + H2O = 1-(5-phospho-beta-D-ribosyl)-5-[(5-phospho-beta-D-ribosylamino)methylideneamino]imidazole-4-carboxamide. It functions in the pathway amino-acid biosynthesis; L-histidine biosynthesis; L-histidine from 5-phospho-alpha-D-ribose 1-diphosphate: step 3/9. Catalyzes the hydrolysis of the adenine ring of phosphoribosyl-AMP. This Clostridium botulinum (strain Okra / Type B1) protein is Phosphoribosyl-AMP cyclohydrolase.